Here is a 253-residue protein sequence, read N- to C-terminus: Ribonuclease HII (253 aa).

The 184-residue stretch at 70–253 (PLVAGIDEVG…RSFSPVQNAL (184 aa)) folds into the RNase H type-2 domain. A divalent metal cation-binding residues include Asp-76, Glu-77, and Asp-168.

Belongs to the RNase HII family. Mn(2+) is required as a cofactor. Requires Mg(2+) as cofactor.

Its subcellular location is the cytoplasm. The enzyme catalyses Endonucleolytic cleavage to 5'-phosphomonoester.. Its function is as follows. Endonuclease that specifically degrades the RNA of RNA-DNA hybrids. The sequence is that of Ribonuclease HII from Latilactobacillus sakei subsp. sakei (strain 23K) (Lactobacillus sakei subsp. sakei).